Here is an 874-residue protein sequence, read N- to C-terminus: Tyrosine-protein kinase receptor TYRO3 (874 aa).

Positions 1–20 are cleaved as a signal peptide; that stretch reads MEVSLCILLFLLHFNEGIHG. 2 Ig-like C2-type domains span residues 21–106 and 117–198; these read VRFT…IISS and PHFG…GTVH. The Extracellular segment spans residues 21-411; that stretch reads VRFTQKPFHQ…QAQTQRGHMW (391 aa). C42 and C95 are oxidised to a cystine. 6 N-linked (GlcNAc...) asparagine glycosylation sites follow: N135, N174, N217, N270, N305, and N373. C138 and C181 are disulfide-bonded. 2 Fibronectin type-III domains span residues 202–297 and 299–403; these read RPDS…TPQA and PSAA…AMQA. A helical membrane pass occupies residues 412–432; that stretch reads VGLLFGLLVATMVGLLLIVLI. Over 433–874 the chain is Cytoplasmic; the sequence is RNRGKETQFG…EEEEDVIINV (442 aa). A Protein kinase domain is found at 497 to 768; the sequence is LTLGRMLGKG…QHLIDQLELL (272 aa). Residues 503–511 and K529 each bind ATP; that span reads LGKGEFGSV. The active-site Proton acceptor is D634. Phosphotyrosine; by autocatalysis is present on Y665.

The protein belongs to the protein kinase superfamily. Tyr protein kinase family. AXL/UFO subfamily.

It localises to the cell membrane. The enzyme catalyses L-tyrosyl-[protein] + ATP = O-phospho-L-tyrosyl-[protein] + ADP + H(+). In terms of biological role, may be involved in cell adhesion processes, particularly in the central nervous system. The polypeptide is Tyrosine-protein kinase receptor TYRO3 (tyro3) (Danio rerio (Zebrafish)).